The chain runs to 420 residues: Methyltransferase/ribosomally synthesized cyclic peptide gymnopeptides precursor gymMA1 (420 aa).

Residues 1–251 are methyltransferase domain; it reads MQSSTQKQAG…GISTFYIPPK (251 aa). Residues R72, Y76, and Y98 contribute to the active site. Positions 98, 100, 103, 130, 172, 213, 244, and 245 each coordinate S-adenosyl-L-methionine. The segment at 252-378 is clasp domain; that stretch reads ELKDPSMDIM…WALRCAMKKM (127 aa). Residues 379–392 form a precursor leader region; sequence PSSFMDEVDANNLP. N-methylvaline occurs at positions 394 and 396. Position 398 is an N-methylglycine (G398). N-methylvaline is present on V399. An N-methylalanine modification is found at A400. G402 is subject to N-methylglycine. An N-methylvaline mark is found at V404, V406, V408, and V410.

In the N-terminal section; belongs to the precorrin methyltransferase family. In terms of assembly, homodimer. GymMA1 automethylates at Val-394, Val-396, Gly-398, Val-399, Ala-400, Gly-402, Val-404, Val-406, Val-408 and Val-410 before being processed by a prolyloligopeptidase which likely forms a peptidyl ester upon removal of the follower propeptide, which then undergoes macrocyclization with the N-terminus of the modified core peptide. Peptide backbone alpha-N-methylations change the physicochemical properties of amide bonds to provide structural constraints and other favorable characteristics including biological membrane permeability to peptides.

The protein operates within mycotoxin biosynthesis. Functionally, fusion protein of the methyltransferase gymM1 and the gymnopeptides precursor; part of the gene cluster that mediates the biosynthesis of gymnopeptides, highly methylated cyclic octadecapeptides with striking antiproliferative activity on several human cancer cell lines. Gymnopeptides derive from the C-terminus of the gymMA1 protein, and it is the gymMA1 protein that methylates its own C-terminus using S-adenosyl methionine (SAM). The C-terminus is subsequently cleaved off and macrocyclized by a prolyloligopeptidase to give the final product. This chain is Methyltransferase/ribosomally synthesized cyclic peptide gymnopeptides precursor gymMA1, found in Gymnopus fusipes (Spindle toughshank).